Here is a 99-residue protein sequence, read N- to C-terminus: U8-agatoxin-Ao1a (99 aa).

The first 19 residues, 1 to 19, serve as a signal peptide directing secretion; sequence MKSLLFVTIAVYFVAQAVT. The propeptide occupies 20-45; that stretch reads ANLLSNFLGSSLIDDDKGNMHKLYKR.

This sequence belongs to the neurotoxin 02 (plectoxin) family. Post-translationally, contains 5 disulfide bonds. In terms of tissue distribution, expressed by the venom gland.

It is found in the secreted. This chain is U8-agatoxin-Ao1a, found in Agelena orientalis (Funnel-web spider).